The following is a 437-amino-acid chain: Glutamyl-tRNA reductase (437 aa).

Substrate is bound by residues 49–52 (TCNR), serine 109, 114–116 (EGQ), and glutamine 120. Cysteine 50 functions as the Nucleophile in the catalytic mechanism. Residue 198–203 (GAGRMS) coordinates NADP(+).

Belongs to the glutamyl-tRNA reductase family. Homodimer.

The enzyme catalyses (S)-4-amino-5-oxopentanoate + tRNA(Glu) + NADP(+) = L-glutamyl-tRNA(Glu) + NADPH + H(+). The protein operates within porphyrin-containing compound metabolism; protoporphyrin-IX biosynthesis; 5-aminolevulinate from L-glutamyl-tRNA(Glu): step 1/2. It functions in the pathway porphyrin-containing compound metabolism; chlorophyll biosynthesis. Catalyzes the NADPH-dependent reduction of glutamyl-tRNA(Glu) to glutamate 1-semialdehyde (GSA). In Synechococcus sp. (strain CC9311), this protein is Glutamyl-tRNA reductase.